A 133-amino-acid chain; its full sequence is Small ribosomal subunit protein bS6 (133 aa).

The protein belongs to the bacterial ribosomal protein bS6 family.

Binds together with bS18 to 16S ribosomal RNA. In Borrelia turicatae (strain 91E135), this protein is Small ribosomal subunit protein bS6.